The primary structure comprises 1003 residues: Putative helicase MOV-10 (1003 aa).

The residue at position 148 (Lys-148) is an N6-acetyllysine. A phosphothreonine mark is found at Thr-160 and Thr-254. Ser-432 bears the Phosphoserine mark. Position 524–531 (524–531) interacts with ATP; the sequence is GPPGTGKT. Positions 645–648 match the DEAG box motif; that stretch reads DEAG. The interaction with AGO2 and APOBEC3G stretch occupies residues 921–965; it reads NPLLLGHDPDWKVFLEFCKENGGYTGCPFPAKLDLQQGQNLLQGL. Residues 968-1003 form a disordered region; it reads LSPSTSGLKSHDYLPQEREGEEGLSLQVEPEWRNEL. Residues Ser-969 and Ser-977 each carry the phosphoserine modification. The span at 976-985 shows a compositional bias: basic and acidic residues; sequence KSHDYLPQER.

It belongs to the DNA2/NAM7 helicase family. SDE3 subfamily. Interacts with DICER1, AGO2, TARBP2, EIF6 and RPL7A (60S ribosome subunit); they form a large RNA-induced silencing complex (RISC). Interacts with APOBEC3G in an RNA-dependent manner. Interacts with TRIM71 (via NHL repeats) in an RNA-dependent manner. Interacts with both protein products of LIRE1, ORF1p and ORF2p. Interacts with TUT4 and, to a lesser extent, TUT7; the interactions are RNA-dependent. Interacts with AGO2, TNRC6B and UPF1; the interactions are direct and RNA-dependent. Interacts with FMR1; this interaction is direct, occurs in an RNA-dependent manner on polysomes and induces association of MOV10 with RNAs. Interacts with SHFL; the interaction increases in presence of RNA. Interacts with DHX34; the interaction is-RNA independent. Interacts with RBM46. In terms of processing, ubiquitinated by the DCX(DCAF12) complex that specifically recognizes the glutamate-leucine (Glu-Leu) degron at the C-terminus, leading to its degradation.

The protein localises to the cytoplasm. It localises to the P-body. The protein resides in the cytoplasmic ribonucleoprotein granule. It is found in the stress granule. Its subcellular location is the nucleus. The catalysed reaction is ATP + H2O = ADP + phosphate + H(+). Its function is as follows. 5' to 3' RNA helicase that is involved in a number of cellular roles ranging from mRNA metabolism and translation, modulation of viral infectivity, inhibition of retrotransposition, or regulation of synaptic transmission. Plays an important role in innate antiviral immunity by promoting type I interferon production. Mechanistically, specifically uses IKKepsilon/IKBKE as the mediator kinase for IRF3 activation. Contributes to UPF1 mRNA target degradation by translocation along 3' UTRs. Required for microRNA (miRNA)-mediated gene silencing by the RNA-induced silencing complex (RISC). Required for both miRNA-mediated translational repression and miRNA-mediated cleavage of complementary mRNAs by RISC. In cooperation with FMR1, regulates miRNA-mediated translational repression by AGO2. Restricts retrotransposition of long interspersed element-1 (LINE-1) in cooperation with TUT4 and TUT7 counteracting the RNA chaperonne activity of L1RE1. Facilitates LINE-1 uridylation by TUT4 and TUT7. Required for embryonic viability and for normal central nervous system development and function. Plays two critical roles in early brain development: suppresses retroelements in the nucleus by directly inhibiting cDNA synthesis, while regulates cytoskeletal mRNAs to influence neurite outgrowth in the cytosol. May function as a messenger ribonucleoprotein (mRNP) clearance factor. This Bos taurus (Bovine) protein is Putative helicase MOV-10 (MOV10).